Consider the following 308-residue polypeptide: Glutaminase 2 (308 aa).

Positions 66, 117, 161, 168, 192, 244, and 262 each coordinate substrate.

This sequence belongs to the glutaminase family. Homotetramer.

The catalysed reaction is L-glutamine + H2O = L-glutamate + NH4(+). The chain is Glutaminase 2 from Escherichia coli O157:H7.